The sequence spans 212 residues: Large ribosomal subunit protein uL1 (212 aa).

The protein belongs to the universal ribosomal protein uL1 family. Part of the 50S ribosomal subunit.

Functionally, binds directly to 23S rRNA. Probably involved in E site tRNA release. Protein L1 is also a translational repressor protein, it controls the translation of its operon by binding to its mRNA. The chain is Large ribosomal subunit protein uL1 from Haloferax volcanii (strain ATCC 29605 / DSM 3757 / JCM 8879 / NBRC 14742 / NCIMB 2012 / VKM B-1768 / DS2) (Halobacterium volcanii).